Consider the following 466-residue polypeptide: Ribulose bisphosphate carboxylase large chain (466 aa).

Lys-5 is subject to N6,N6,N6-trimethyllysine. Asn-114 and Thr-164 together coordinate substrate. Lys-166 (proton acceptor) is an active-site residue. Residue Lys-168 coordinates substrate. Mg(2+) is bound by residues Lys-192, Asp-194, and Glu-195. Position 192 is an N6-carboxylysine (Lys-192). The active-site Proton acceptor is the His-285. Arg-286, His-318, and Ser-370 together coordinate substrate.

This sequence belongs to the RuBisCO large chain family. Type I subfamily. As to quaternary structure, heterohexadecamer of 8 large chains and 8 small chains; disulfide-linked. The disulfide link is formed within the large subunit homodimers. Requires Mg(2+) as cofactor. Post-translationally, the disulfide bond which can form in the large chain dimeric partners within the hexadecamer appears to be associated with oxidative stress and protein turnover.

Its subcellular location is the plastid. It is found in the chloroplast. It catalyses the reaction 2 (2R)-3-phosphoglycerate + 2 H(+) = D-ribulose 1,5-bisphosphate + CO2 + H2O. The enzyme catalyses D-ribulose 1,5-bisphosphate + O2 = 2-phosphoglycolate + (2R)-3-phosphoglycerate + 2 H(+). In terms of biological role, ruBisCO catalyzes two reactions: the carboxylation of D-ribulose 1,5-bisphosphate, the primary event in carbon dioxide fixation, as well as the oxidative fragmentation of the pentose substrate in the photorespiration process. Both reactions occur simultaneously and in competition at the same active site. The polypeptide is Ribulose bisphosphate carboxylase large chain (Drosophyllum lusitanicum (Portuguese sundew)).